Consider the following 334-residue polypeptide: Glycerol-3-phosphate dehydrogenase [NAD(P)+] 2 (334 aa).

NADPH-binding residues include Trp16, Arg36, Arg37, and Lys110. Sn-glycerol 3-phosphate contacts are provided by Lys110 and Gly140. Residue Ala144 coordinates NADPH. Residues Lys195, Asp248, Ser258, Arg259, and Asn260 each contribute to the sn-glycerol 3-phosphate site. Lys195 functions as the Proton acceptor in the catalytic mechanism. Arg259 is a binding site for NADPH. Residues Val282 and Glu284 each coordinate NADPH.

It belongs to the NAD-dependent glycerol-3-phosphate dehydrogenase family.

Its subcellular location is the cytoplasm. It carries out the reaction sn-glycerol 3-phosphate + NAD(+) = dihydroxyacetone phosphate + NADH + H(+). The catalysed reaction is sn-glycerol 3-phosphate + NADP(+) = dihydroxyacetone phosphate + NADPH + H(+). The protein operates within membrane lipid metabolism; glycerophospholipid metabolism. Its function is as follows. Catalyzes the reduction of the glycolytic intermediate dihydroxyacetone phosphate (DHAP) to sn-glycerol 3-phosphate (G3P), the key precursor for phospholipid synthesis. In Mycobacterium bovis (strain ATCC BAA-935 / AF2122/97), this protein is Glycerol-3-phosphate dehydrogenase [NAD(P)+] 2.